The sequence spans 169 residues: E1B protein, small T-antigen (169 aa).

The disordered stretch occupies residues 147-169; that stretch reads GSVVEEEQGEEHLARDSDDPFFD. Residues 156-169 are compositionally biased toward basic and acidic residues; sequence EEHLARDSDDPFFD.

It belongs to the adenoviridae E1B 19 kDa protein family.

The sequence is that of E1B protein, small T-antigen from Canine adenovirus serotype 1 (strain Glaxo) (CAdV-1).